The following is a 489-amino-acid chain: Betaine aldehyde dehydrogenase (489 aa).

K(+) contacts are provided by T26 and D93. 150–152 (GAW) provides a ligand contact to NAD(+). The active-site Charge relay system is K162. Position 176 to 179 (176 to 179 (KPSE)) interacts with NAD(+). V180 contributes to the K(+) binding site. 229–232 (GVET) is a binding site for NAD(+). K(+) is bound at residue L245. The active-site Proton acceptor is E251. G253, C285, and E386 together coordinate NAD(+). C285 acts as the Nucleophile in catalysis. C285 is subject to Cysteine sulfenic acid (-SOH). K456 and G459 together coordinate K(+). E463 functions as the Charge relay system in the catalytic mechanism.

The protein belongs to the aldehyde dehydrogenase family. In terms of assembly, dimer of dimers. K(+) serves as cofactor.

It catalyses the reaction betaine aldehyde + NAD(+) + H2O = glycine betaine + NADH + 2 H(+). It functions in the pathway amine and polyamine biosynthesis; betaine biosynthesis via choline pathway; betaine from betaine aldehyde: step 1/1. Involved in the biosynthesis of the osmoprotectant glycine betaine. Catalyzes the irreversible oxidation of betaine aldehyde to the corresponding acid. This Burkholderia cenocepacia (strain ATCC BAA-245 / DSM 16553 / LMG 16656 / NCTC 13227 / J2315 / CF5610) (Burkholderia cepacia (strain J2315)) protein is Betaine aldehyde dehydrogenase.